A 535-amino-acid chain; its full sequence is Glutamyl-tRNA reductase 3, chloroplastic (535 aa).

The Nucleophile role is filled by cysteine 131. Substrate is bound by residues cysteine 131–arginine 133, serine 190, glutamate 195–glutamine 197, and glutamine 201. Glycine 272–glycine 277 serves as a coordination point for NADP(+).

It belongs to the glutamyl-tRNA reductase family. As to expression, primarily expressed in roots.

The protein resides in the plastid. The protein localises to the chloroplast. The catalysed reaction is (S)-4-amino-5-oxopentanoate + tRNA(Glu) + NADP(+) = L-glutamyl-tRNA(Glu) + NADPH + H(+). Its pathway is porphyrin-containing compound metabolism; protoporphyrin-IX biosynthesis; 5-aminolevulinate from L-glutamyl-tRNA(Glu): step 1/2. In terms of biological role, catalyzes the NADPH-dependent reduction of glutamyl-tRNA(Glu) to glutamate 1-semialdehyde (GSA). This is Glutamyl-tRNA reductase 3, chloroplastic (HEMA3) from Hordeum vulgare (Barley).